Reading from the N-terminus, the 487-residue chain is MAGRGGLLMLENFIGGKFLPCSSYLDSYDPSTGEVYCHVPNSGKEEIEAAVEAARAAFPGWSSRSPQERSQVLQRLADLLEQSLEELAQAESKDQGKTITLARTMDIPRAVHNFRFFASSILHHTSECTQMDHLGCLHYTVRAPVGIAALISPWNLPLYLLTWKIAPAIAAGNTVIAKPSELTSVTAWMMCRLLEKAGVPPGVVNIVFGTGPRVGEALVSHPEVPLISFTGSQPTAERIMQLSAPHCKKLSLELGGKNPAVIFEDANLAECIPTTVRSSFANQGEICLCTSRIFVQRSIYSEFLKRFVEAARMWKVGIPSDPSADMGALISKAHLEKVRSYIKKARMEGAQILCGEGVDKLNLPPRNQAGYFMLPTVITDVKDESCCMKEEIFGPVTCVVPFDSEEEVIQRANNVKYGLAATVWSGNVGRVHRVAKKLQSGLVWTNCWLIRELNLPFGGMKSSGVGREGAKDSYEFFTEVKTITVKH.

231–236 (GSQPTA) contributes to the NAD(+) binding site. E253 functions as the Proton acceptor in the catalytic mechanism. C287 functions as the Nucleophile in the catalytic mechanism.

Belongs to the aldehyde dehydrogenase family.

It is found in the cytoplasm. It catalyses the reaction 2-aminomuconate 6-semialdehyde + NAD(+) + H2O = (2Z,4E)-2-aminomuconate + NADH + 2 H(+). It participates in amino-acid degradation; L-kynurenine degradation. Catalyzes the NAD-dependent oxidation of 2-aminomuconic semialdehyde of the kynurenine metabolic pathway in L-tryptophan degradation. The sequence is that of 2-aminomuconic semialdehyde dehydrogenase (ALDH8A1) from Bos taurus (Bovine).